Here is a 399-residue protein sequence, read N- to C-terminus: E3 ubiquitin-protein ligase APD4 (399 aa).

A run of 2 helical transmembrane segments spans residues 42–62 (FGII…GVYG) and 284–304 (LIAY…AIHF). The segment at 348 to 387 (CAICFDAPRDCCFLPCGHCVSCYQCGTKIKRTKGRCPICR) adopts an RING-type zinc-finger fold.

In terms of tissue distribution, expressed in the shoot apical meristems (SAM), root tips and inflorescences.

The protein localises to the endomembrane system. Its subcellular location is the vacuole membrane. It catalyses the reaction S-ubiquitinyl-[E2 ubiquitin-conjugating enzyme]-L-cysteine + [acceptor protein]-L-lysine = [E2 ubiquitin-conjugating enzyme]-L-cysteine + N(6)-ubiquitinyl-[acceptor protein]-L-lysine.. It functions in the pathway protein modification; protein ubiquitination. Functionally, involved in pollen mitosis II (PMII) regulation during male gametogenesis. The protein is E3 ubiquitin-protein ligase APD4 of Arabidopsis thaliana (Mouse-ear cress).